The following is a 983-amino-acid chain: Probable beta-galactosidase C (983 aa).

Residues 1-23 form the signal peptide; the sequence is MRIFSFLFLLLLGILTGQGLVSG. Y82, N127, A128, E129, and N187 together coordinate substrate. The active-site Proton donor is E188. An N-linked (GlcNAc...) asparagine glycan is attached at N197. Y251 is a binding site for substrate. A disulfide bond links C257 and C304. Residue N276 is glycosylated (N-linked (GlcNAc...) asparagine). E287 (nucleophile) is an active-site residue. Y353 contacts substrate. Residues N391, N434, N466, N516, N601, N676, N714, N719, and N804 are each glycosylated (N-linked (GlcNAc...) asparagine).

The protein belongs to the glycosyl hydrolase 35 family.

The protein resides in the secreted. The enzyme catalyses Hydrolysis of terminal non-reducing beta-D-galactose residues in beta-D-galactosides.. Cleaves beta-linked terminal galactosyl residues from gangliosides, glycoproteins, and glycosaminoglycans. The chain is Probable beta-galactosidase C (lacC) from Neosartorya fischeri (strain ATCC 1020 / DSM 3700 / CBS 544.65 / FGSC A1164 / JCM 1740 / NRRL 181 / WB 181) (Aspergillus fischerianus).